A 121-amino-acid chain; its full sequence is Large ribosomal subunit protein bL19 (121 aa).

Belongs to the bacterial ribosomal protein bL19 family.

Its function is as follows. This protein is located at the 30S-50S ribosomal subunit interface and may play a role in the structure and function of the aminoacyl-tRNA binding site. In Chloroherpeton thalassium (strain ATCC 35110 / GB-78), this protein is Large ribosomal subunit protein bL19.